The primary structure comprises 593 residues: MVRDLVTLPSSLPLITAGFATDQVHLLIGTGSTDSVSVCKNRIHSILNAGGNPIVVNPSSPSHTKQLQLEFGKFAKFEIVEREFRLSDLTTLGRVLVCKVVDRVFVDLPITQSRLCEEIFWQCQKLRIPINTFHKPEFSTFNMIPTWVDPKGSGLQISVTTNGNGYILANRIKRDIISHLPPNISEVVINMGYLKDRIINEDHKALLEEKYYQTDMSLPGFGYGLDEDGWESHKFNKLIREFEMTSREQRLKRTRWLSQIMEYYPMNKLSDIKLEDFETSSSPNKKTKQETVTEGVVPPTDENIENGTKQLQLSEVKKEEGPKKLGKISLVGSGPGSVSMLTIGALQEIKSADIILADKLVPQAILDLIPPKTETFIAKKFPGNAERAQQELLAKGLESLDNGLKVVRLKQGDPYIFGRGGEEFNFFKDHGYIPVVLPGISSSLACTVLAQIPATQRDIADQVLICTGTGRKGALPIIPEFVESRTTVFLMALHRANVLITGLLKHGWDGDVPAAIVERGSCPDQRVTRTLLKWVPEVVEEIGSRPPGVLVVGKAVNALVEKDLINFDESRKFVIDEGFREFEVDVDSLFKLY.

The segment at 278–303 (ETSSSPNKKTKQETVTEGVVPPTDEN) is disordered.

Belongs to the precorrin methyltransferase family.

It carries out the reaction uroporphyrinogen III + 2 S-adenosyl-L-methionine = precorrin-2 + 2 S-adenosyl-L-homocysteine + H(+). Siroheme synthase involved in methionine biosynthesis. The polypeptide is Uroporphyrinogen-III C-methyltransferase (Saccharomyces cerevisiae (strain ATCC 204508 / S288c) (Baker's yeast)).